Consider the following 294-residue polypeptide: 4-hydroxy-tetrahydrodipicolinate synthase (294 aa).

T46 is a binding site for pyruvate. Y135 serves as the catalytic Proton donor/acceptor. The Schiff-base intermediate with substrate role is filled by K164. Position 205 (I205) interacts with pyruvate.

It belongs to the DapA family. In terms of assembly, homotetramer; dimer of dimers.

The protein localises to the cytoplasm. The catalysed reaction is L-aspartate 4-semialdehyde + pyruvate = (2S,4S)-4-hydroxy-2,3,4,5-tetrahydrodipicolinate + H2O + H(+). Its pathway is amino-acid biosynthesis; L-lysine biosynthesis via DAP pathway; (S)-tetrahydrodipicolinate from L-aspartate: step 3/4. In terms of biological role, catalyzes the condensation of (S)-aspartate-beta-semialdehyde [(S)-ASA] and pyruvate to 4-hydroxy-tetrahydrodipicolinate (HTPA). The polypeptide is 4-hydroxy-tetrahydrodipicolinate synthase (Nitratiruptor sp. (strain SB155-2)).